A 117-amino-acid polypeptide reads, in one-letter code: Transcription elongation factor SPT4 (117 aa).

An N-acetylalanine modification is found at A2. The interaction with SUPT5H stretch occupies residues 2-40 (ALETVPKDLRHLRACLLCSLVKTIDQFEYDGCDNCDAYL). The Zn(2+) site is built by C16, C19, C33, and C36. The C4-type zinc finger occupies 16 to 36 (CLLCSLVKTIDQFEYDGCDNC).

This sequence belongs to the SPT4 family. Interacts with SUPT5H to form DSIF. DSIF interacts with the positive transcription elongation factor b complex (P-TEFb complex), which is composed of CDK9 and cyclin-T (CCNT1 or CCNT2). DSIF interacts with RNA polymerase II, and this interaction is reduced by phosphorylation of the C-terminal domain (CTD) of POLR2A by P-TEFb. DSIF also interacts with the NELF complex, which is composed of NELFA, NELFB, NELFD and NELFE, and this interaction occurs following prior binding of DSIF to RNA polymerase II. DSIF also interacts with PRMT1/HRMT1L2, TATSF1, RNGTT/CAP1A, PRMT5/SKB1, SUPT6H, and can interact with PIN1. Post-translationally, ubiquitinated by UBR5 when not assembled in the DSIF complex, leading to its degradation: UBR5 recognizes and binds a degron that is not accessible when SUPT4H1 is part of the DSIF complex.

Its subcellular location is the nucleus. Functionally, component of the DRB sensitivity-inducing factor complex (DSIF complex), which regulates mRNA processing and transcription elongation by RNA polymerase II. DSIF positively regulates mRNA capping by stimulating the mRNA guanylyltransferase activity of RNGTT/CAP1A. DSIF also acts cooperatively with the negative elongation factor complex (NELF complex) to enhance transcriptional pausing at sites proximal to the promoter. Transcriptional pausing may facilitate the assembly of an elongation competent RNA polymerase II complex. DSIF and NELF promote pausing by inhibition of the transcription elongation factor TFIIS/S-II. TFIIS/S-II binds to RNA polymerase II at transcription pause sites and stimulates the weak intrinsic nuclease activity of the enzyme. Cleavage of blocked transcripts by RNA polymerase II promotes the resumption of transcription from the new 3' terminus and may allow repeated attempts at transcription through natural pause sites. This Pongo abelii (Sumatran orangutan) protein is Transcription elongation factor SPT4 (SUPT4H1).